A 470-amino-acid chain; its full sequence is MSDGKKHVVIIGGGITGLAAAFYMEKEIKEKNLPLELTLVEASPRVGGKIQTVKKDGYIIERGPDSFLERKKSAPQLVKDLGLEHLLVNNATGQSYVLVNRTLHPMPKGAVMGIPTKIAPFVSTGLFSLSGKARAAMDFILPASKTKDDQSLGEFFRRRVGDEVVENLIEPLLSGIYAGDIDKLSLMSTFPQFYQTEQKHRSLILGMKKTRPQGSGQQLTAKKQGQFQTLSTGLQTLVEEIEKQLKLTKVYKGTKVTKLSHSGSCYSLELDNGVTLDADSVIVTAPHKAAAGMLSELPAISHLKNMHSTSVANVALGFPEGSVQMEHEGTGFVISRNSDFAITACTWTNKKWPHAAPEGKTLLRAYVGKAGDESIVDLSDNDIINIVLEDLKKVMNINGEPEMTCVTRWHESMPQYHVGHKQRIKELREALASAYPGVYMTGASFEGVGIPDCIDQGKAAVSDALTYLFS.

FAD-binding positions include 12–17 (GGGITG), 41–42 (EA), K49, 63–66 (GPDS), V256, W409, and 448–450 (VGI).

It belongs to the protoporphyrinogen/coproporphyrinogen oxidase family. Coproporphyrinogen III oxidase subfamily. In terms of assembly, monomer. It depends on FAD as a cofactor.

It is found in the cytoplasm. The protein localises to the cell membrane. It catalyses the reaction coproporphyrinogen III + 3 O2 = coproporphyrin III + 3 H2O2. It participates in porphyrin-containing compound metabolism; protoheme biosynthesis. Its activity is regulated as follows. Only weakly inhibited by acifluorfen, in contrast to eukaryotic family members. Weakly inhibited by methylacifluorfen. Bilirubin, biliverdin and hemin are all competitive inhibitors. Functionally, involved in coproporphyrin-dependent heme b biosynthesis. Catalyzes the oxidation of coproporphyrinogen III to coproporphyrin III. Can also oxidize protoporphyrinogen IX to protoporphyrin-IX. The specific activity for the oxidation of coproporphyrinogen III is much higher than that for the oxidation of protoporphyrinogen IX. Can also oxidize mesoporphyrinogen IX, but not uroporphyrinogen III. The polypeptide is Coproporphyrinogen III oxidase (Bacillus subtilis (strain 168)).